The chain runs to 674 residues: tRNA wybutosine-synthesizing protein 4 (674 aa).

Residues R84, G109, D140, 184–185, and E212 each bind S-adenosyl-L-methionine; that span reads DL.

Belongs to the methyltransferase superfamily. LCMT family.

It catalyses the reaction 7-[(3S)-3-amino-3-carboxypropyl]wyosine(37) in tRNA(Phe) + S-adenosyl-L-methionine = 7-[(3S)-(3-amino-3-methoxycarbonyl)propyl]wyosine(37) in tRNA(Phe) + S-adenosyl-L-homocysteine. The catalysed reaction is 7-[(3S)-(3-amino-3-methoxycarbonyl)propyl]wyosine(37) in tRNA(Phe) + S-adenosyl-L-methionine + CO2 = wybutosine(37) in tRNA(Phe) + S-adenosyl-L-homocysteine + 2 H(+). It participates in tRNA modification; wybutosine-tRNA(Phe) biosynthesis. Its function is as follows. Probable S-adenosyl-L-methionine-dependent methyltransferase that acts as a component of the wybutosine biosynthesis pathway. Wybutosine is a hyper modified guanosine with a tricyclic base found at the 3'-position adjacent to the anticodon of eukaryotic phenylalanine tRNA. May methylate the carboxyl group of leucine residues to form alpha-leucine ester residues. In Candida glabrata (strain ATCC 2001 / BCRC 20586 / JCM 3761 / NBRC 0622 / NRRL Y-65 / CBS 138) (Yeast), this protein is tRNA wybutosine-synthesizing protein 4 (PPM2).